The primary structure comprises 550 residues: Undecaprenyl phosphate-alpha-4-amino-4-deoxy-L-arabinose arabinosyl transferase 2 (550 aa).

The next 11 helical transmembrane spans lie at 4–24, 81–101, 110–132, 176–196, 204–224, 255–275, 288–308, 313–333, 348–368, 381–401, and 409–429; these read LKPGIGLMCIIALYYLLPLSF, FAVHFGSAFSIALTALMVYWL, WLGLTAAAIYSSCLLVYSIGTYA, FMTKGFLALAVPVLSVLPWVI, VFIYGPLALLGAVATSLPWVI, APFWYYLPVLLAGTLPWLGLL, TQSGAFYLLGWVVMPLLFFSL, LPTYILPSFAPLALLMARYAA, LLFGLLCVITVASVLAPWGLA, VLLGVLGFLVWAAVGGLTLRA, and AALCPLGIALLVGQAIPQQVI.

Belongs to the glycosyltransferase 83 family.

It localises to the cell inner membrane. It carries out the reaction 4-amino-4-deoxy-alpha-L-arabinopyranosyl di-trans,octa-cis-undecaprenyl phosphate + lipid IVA = lipid IIA + di-trans,octa-cis-undecaprenyl phosphate.. It functions in the pathway lipopolysaccharide metabolism; 4-amino-4-deoxy-beta-L-arabinose-lipid A biosynthesis. Its function is as follows. Catalyzes the transfer of the L-Ara4N moiety of the glycolipid undecaprenyl phosphate-alpha-L-Ara4N to lipid A. The modified arabinose is attached to lipid A and is required for resistance to polymyxin and cationic antimicrobial peptides. The polypeptide is Undecaprenyl phosphate-alpha-4-amino-4-deoxy-L-arabinose arabinosyl transferase 2 (Sodalis glossinidius (strain morsitans)).